A 308-amino-acid chain; its full sequence is Dipeptide transport system permease protein DppB (308 aa).

The next 7 helical transmembrane spans lie at 10-30 (WAMA…MKVI), 59-79 (LIFQ…GPSI), 100-120 (LGMT…VIAA), 131-151 (AMSL…TLLI), 168-188 (SPIH…AIIA), 228-248 (MPVI…SFVI), and 278-298 (VFYS…YGLL). The 202-residue stretch at 94–295 (FPVSFELGMT…IMLFLVDLAY (202 aa)) folds into the ABC transmembrane type-1 domain.

It belongs to the binding-protein-dependent transport system permease family. OppBC subfamily.

The protein resides in the cell membrane. Its function is as follows. Probably part of the ABC transporter DppBCDE involved in dipeptide transport. Responsible for the translocation of the substrate across the membrane. This chain is Dipeptide transport system permease protein DppB (dppB), found in Bacillus subtilis (strain 168).